The following is a 145-amino-acid chain: Class I hydrophobin 1 (145 aa).

The N-terminal stretch at 1–18 (MYASVIIYTLVALCGVMS) is a signal peptide. Disulfide bonds link Cys88–Cys118, Cys95–Cys112, Cys96–Cys106, and Cys119–Cys128. A glycan (N-linked (GlcNAc...) asparagine) is linked at Asn108.

Belongs to the fungal hydrophobin family. In terms of assembly, self-assembles to form functional amyloid fibrils called rodlets. Self-assembly into fibrillar rodlets occurs spontaneously at hydrophobic:hydrophilic interfaces and the rodlets further associate laterally to form amphipathic monolayers.

It localises to the secreted. It is found in the cell wall. Its function is as follows. Aerial growth, conidiation, and dispersal of filamentous fungi in the environment rely upon a capability of their secreting small amphipathic proteins called hydrophobins (HPBs) with low sequence identity. Class I can self-assemble into an outermost layer of rodlet bundles on aerial cell surfaces, conferring cellular hydrophobicity that supports fungal growth, development and dispersal; whereas Class II form highly ordered films at water-air interfaces through intermolecular interactions but contribute nothing to the rodlet structure. Hyd1 is a class I hydrophobin that is involved in plant root attachment and colonization, and that might also protect the growing hyphae from locally synthesized plant defense compounds during the first stages of cucumber interaction, allowing this opportunistic, non-pathogenic fungus to colonize the intercellular spaces of the plant root. In Trichoderma asperellum (Filamentous fungus), this protein is Class I hydrophobin 1.